The sequence spans 557 residues: Fatty acyl-CoA hydrolase precursor, medium chain (557 aa).

A signal peptide spans 1–25 (MATEKNTLLSLILTAGITALVATGQ). A disulfide bridge connects residues Cys93 and Cys122. The Acyl-ester intermediate role is filled by Ser227. Residues Glu345 and His460 each act as charge relay system in the active site. A glycan (N-linked (GlcNAc...) asparagine) is linked at Asn476.

Belongs to the type-B carboxylesterase/lipase family. In terms of tissue distribution, highest levels in uropygial gland, much lower in liver and kidney.

Functionally, fatty acid biosynthesis chain termination and release of the free fatty acid product is achieved by hydrolysis of the thio ester by a thioesterase. This thioesterase may be associated with peroxisome proliferation and may play a role in the production of 3-hydroxy fatty acid diester pheromones. The protein is Fatty acyl-CoA hydrolase precursor, medium chain of Anas platyrhynchos (Mallard).